Here is a 316-residue protein sequence, read N- to C-terminus: Putative S-adenosyl-L-methionine-dependent methyltransferase MAB_4606c (316 aa).

Residues D137 and 166 to 167 (DL) contribute to the S-adenosyl-L-methionine site.

The protein belongs to the UPF0677 family.

Its function is as follows. Exhibits S-adenosyl-L-methionine-dependent methyltransferase activity. This Mycobacteroides abscessus (strain ATCC 19977 / DSM 44196 / CCUG 20993 / CIP 104536 / JCM 13569 / NCTC 13031 / TMC 1543 / L948) (Mycobacterium abscessus) protein is Putative S-adenosyl-L-methionine-dependent methyltransferase MAB_4606c.